Reading from the N-terminus, the 84-residue chain is UPF0298 protein NWMN_0985 (84 aa).

Belongs to the UPF0298 family.

It is found in the cytoplasm. The chain is UPF0298 protein NWMN_0985 from Staphylococcus aureus (strain Newman).